The primary structure comprises 311 residues: tRNA pseudouridine synthase B (311 aa).

Asp52 functions as the Nucleophile in the catalytic mechanism.

The protein belongs to the pseudouridine synthase TruB family. Type 1 subfamily.

It carries out the reaction uridine(55) in tRNA = pseudouridine(55) in tRNA. Functionally, responsible for synthesis of pseudouridine from uracil-55 in the psi GC loop of transfer RNAs. This Burkholderia mallei (strain ATCC 23344) protein is tRNA pseudouridine synthase B.